Reading from the N-terminus, the 1155-residue chain is RHO1 GDP-GTP exchange protein 1 (1155 aa).

Methionine 1 is modified (N-acetylmethionine). A compositionally biased stretch (polar residues) spans 100–143 (NSSPQSFTGDQISPTNKKISINDSTRQDKGNSCTTTSSPSQKRS). A disordered region spans residues 100–249 (NSSPQSFTGD…HSRSKSSPVS (150 aa)). Phosphoserine is present on residues serine 154 and serine 155. The span at 155 to 167 (SPSLLSFSKNSGS) shows a compositional bias: low complexity. Phosphothreonine is present on threonine 180. Positions 190–227 (LHSSFNGKHSSSSTSSLFALESLKTQNRRSSNSSNHSS) are enriched in low complexity. Residues 228 to 243 (QYRRHTNQHQRHHSRS) show a composition bias toward basic residues. Serine 433 carries the phosphoserine modification. The region spanning 464 to 651 (KRQEAIYELF…KDLMKRIDRA (188 aa)) is the DH domain. One can recognise a CNH domain in the interval 842 to 1137 (TNRVNDVLIC…RMLKSYAKKI (296 aa)).

Stimulates the exchange of RHO1 GDP-bound form into GTP-bound form. This chain is RHO1 GDP-GTP exchange protein 1 (ROM1), found in Saccharomyces cerevisiae (strain ATCC 204508 / S288c) (Baker's yeast).